We begin with the raw amino-acid sequence, 249 residues long: Transcription factor MYB90 (249 aa).

HTH myb-type domains follow at residues 5-57 and 58-112; these read SKGL…LNYL and KPSI…SKKH. DNA-binding regions (H-T-H motif) lie at residues 33-57 and 85-108; these read WHQV…LNYL and WSLI…NTHL.

In terms of assembly, interacts with BHLH12/MYC1, BHLH1/GL3/MYC6, BHLH2/EGL3/MYC146, and BHLH42/TT8. Expressed only in leaves and siliques.

It localises to the nucleus. Transcription activator, when associated with BHLH12/MYC1, EGL3, or GL3. Promotes the synthesis of phenylpropanoid-derived compounds such as anthocyanins. The sequence is that of Transcription factor MYB90 (MYB90) from Arabidopsis thaliana (Mouse-ear cress).